A 344-amino-acid chain; its full sequence is L-rhamnose-proton symporter (344 aa).

Helical transmembrane passes span 4-24, 38-58, 68-88, 101-121, 137-157, 175-195, 214-234, 259-279, 290-310, and 323-343; these read AITM…CFYA, WSVG…ALLL, FSLS…IGNI, MGIG…TPII, TLLG…AGQL, LVLA…MNAA, LPSY…FCFI, VLLS…YAWG, ISWM…GLVL, and VLSL…IGMA.

Belongs to the L-rhamnose transporter (TC 2.A.7.6) family.

Its subcellular location is the cell inner membrane. The catalysed reaction is L-rhamnopyranose(in) + H(+)(in) = L-rhamnopyranose(out) + H(+)(out). In terms of biological role, uptake of L-rhamnose across the cytoplasmic membrane with the concomitant transport of protons into the cell (symport system). This chain is L-rhamnose-proton symporter, found in Shigella flexneri.